The chain runs to 217 residues: FGFR1 oncogene partner 2 homolog (217 aa).

Coiled-coil stretches lie at residues 6–106 and 163–188; these read TIEK…MSKY and KEQE…TRES. Residues 194–217 are disordered; that stretch reads KEDASESTSLSGLVTSSDLSLRKS. Polar residues predominate over residues 199–217; the sequence is ESTSLSGLVTSSDLSLRKS.

This sequence belongs to the SIKE family.

Its subcellular location is the cytoplasm. The sequence is that of FGFR1 oncogene partner 2 homolog (FGFR1OP2) from Gallus gallus (Chicken).